The chain runs to 154 residues: Protein X (154 aa).

The mitochondrial targeting sequence stretch occupies residues 68-117 (PCALRFTSARCMETTVNAPRNLPKVLHKRTLGLSTMSTTGIETYFKDCVF).

Belongs to the orthohepadnavirus protein X family. In terms of assembly, may form homodimer. May interact with host CEBPA, CFLAR, CREB1, DDB1, E4F1, HBXIP, HSPD1/HSP60, NFKBIA, POLR2E and SMAD4. Interacts with host SMC5-SMC6 complex and induces its degradation. Interacts with host TRPC4AP; leading to prevent ubiquitination of TRPC4AP. Interacts with host PLSCR1; this interaction promotes ubiquitination and degradation of HBx and impairs HBx-mediated cell proliferation. In terms of processing, a fraction may be phosphorylated in insect cells and HepG2 cells, a human hepatoblastoma cell line. Phosphorylated in vitro by host protein kinase C or mitogen-activated protein kinase. N-acetylated in insect cells.

It is found in the host cytoplasm. The protein resides in the host nucleus. It localises to the host mitochondrion. Multifunctional protein that plays a role in silencing host antiviral defenses and promoting viral transcription. Does not seem to be essential for HBV infection. May be directly involved in development of cirrhosis and liver cancer (hepatocellular carcinoma). Most of cytosolic activities involve modulation of cytosolic calcium. The effect on apoptosis is controversial depending on the cell types in which the studies have been conducted. May induce apoptosis by localizing in mitochondria and causing loss of mitochondrial membrane potential. May also modulate apoptosis by binding host CFLAR, a key regulator of the death-inducing signaling complex (DISC). Promotes viral transcription by using the host E3 ubiquitin ligase DDB1 to target the SMC5-SMC6 complex to proteasomal degradation. This host complex would otherwise bind to viral episomal DNA, and prevents its transcription. Moderately stimulates transcription of many different viral and cellular transcription elements. Promoters and enhancers stimulated by HBx contain DNA binding sites for NF-kappa-B, AP-1, AP-2, c-EBP, ATF/CREB, or the calcium-activated factor NF-AT. This chain is Protein X, found in Orangutan hepatitis B virus (isolate Somad) (HBVoru).